Here is a 596-residue protein sequence, read N- to C-terminus: M-phase inducer phosphatase (596 aa).

Phosphoserine is present on residues S99 and S178. The tract at residues 174-221 is disordered; it reads LSSSSFDSYLRPNVSRSRSSGNAPPFLRSRSSSSYSINKKKGTSGGQA. Positions 429 to 533 constitute a Rhodanese domain; the sequence is IFDKCIIIDC…FYENHKNRCD (105 aa). C480 serves as the catalytic Phosphocysteine intermediate.

It belongs to the MPI phosphatase family. In terms of assembly, interacts with rad24 during G2 in a srk1-dependent manner; the interaction is increased during osmostress. Phosphorylated by srk1 in the N-terminus; phosphorylation promotes nuclear exclusion.

It is found in the cytoplasm. The protein resides in the nucleus. It carries out the reaction O-phospho-L-tyrosyl-[protein] + H2O = L-tyrosyl-[protein] + phosphate. Its function is as follows. Tyrosine protein phosphatase which functions as a dosage-dependent inducer of mitotic and meiotic progression. Directly dephosphorylates cdc2 and stimulates its kinase activity. Required for the G2/M transition of the cell cycle. Required for induction of meiosis II. The sequence is that of M-phase inducer phosphatase from Schizosaccharomyces pombe (strain 972 / ATCC 24843) (Fission yeast).